Consider the following 534-residue polypeptide: Probable protein kinase UbiB (534 aa).

Residues 23-43 (DLLFALPLPWFLLAVRYVLPW) traverse the membrane as a helical segment. In terms of domain architecture, Protein kinase spans 125 to 492 (RFDVDPLASA…WKKRKDDWFL (368 aa)). ATP is bound by residues 131-139 (LASASVAQV) and Lys-153. Asp-288 serves as the catalytic Proton acceptor. 2 helical membrane passes run 490–510 (WFLR…AIGG) and 512–532 (LNQL…YLIV).

It belongs to the ABC1 family. UbiB subfamily.

The protein localises to the cell inner membrane. Its pathway is cofactor biosynthesis; ubiquinone biosynthesis [regulation]. Its function is as follows. Is probably a protein kinase regulator of UbiI activity which is involved in aerobic coenzyme Q (ubiquinone) biosynthesis. This Pseudomonas fluorescens (strain SBW25) protein is Probable protein kinase UbiB.